We begin with the raw amino-acid sequence, 174 residues long: MHTTRCILALLLCLTQAMSGCYCQGTLIEEIENLKKYFNSSSLDVVNGGDLVFNILTNWQKAGDTKIIESQIVSFYFKLFEALKDNQAIQRSIDTIKADLFANFFNSSMEKLNDFVKLTKIPVNDLQVQRKAVNELISVMPHLSRKLSLRKRKRSRCCFGGGNRPNKNILASNI.

Positions 1–23 are cleaved as a signal peptide; the sequence is MHTTRCILALLLCLTQAMSGCYC. Position 24 is a pyrrolidone carboxylic acid (Q24). N-linked (GlcNAc...) asparagine glycans are attached at residues N39 and N106.

This sequence belongs to the type II (or gamma) interferon family. Homodimer. Interacts with IFNGR1 (via extracellular domain); this interaction promotes IFNGR1 dimerization. As to expression, released primarily from activated T lymphocytes.

The protein localises to the secreted. Type II interferon produced by immune cells such as T-cells and NK cells that plays crucial roles in antimicrobial, antiviral, and antitumor responses by activating effector immune cells and enhancing antigen presentation. Primarily signals through the JAK-STAT pathway after interaction with its receptor IFNGR1 to affect gene regulation. Upon IFNG binding, IFNGR1 intracellular domain opens out to allow association of downstream signaling components JAK2, JAK1 and STAT1, leading to STAT1 activation, nuclear translocation and transcription of IFNG-regulated genes. Many of the induced genes are transcription factors such as IRF1 that are able to further drive regulation of a next wave of transcription. Plays a role in class I antigen presentation pathway by inducing a replacement of catalytic proteasome subunits with immunoproteasome subunits. In turn, increases the quantity, quality, and repertoire of peptides for class I MHC loading. Increases the efficiency of peptide generation also by inducing the expression of activator PA28 that associates with the proteasome and alters its proteolytic cleavage preference. Up-regulates as well MHC II complexes on the cell surface by promoting expression of several key molecules such as cathepsins B/CTSB, H/CTSH, and L/CTSL. Participates in the regulation of hematopoietic stem cells during development and under homeostatic conditions by affecting their development, quiescence, and differentiation. This is Interferon gamma (IFNG) from Mesocricetus auratus (Golden hamster).